An 844-amino-acid chain; its full sequence is DNA mismatch repair protein MutS (844 aa).

602-609 (GPNMSGKS) lines the ATP pocket.

It belongs to the DNA mismatch repair MutS family.

This protein is involved in the repair of mismatches in DNA. It is possible that it carries out the mismatch recognition step. This protein has a weak ATPase activity. The protein is DNA mismatch repair protein MutS of Streptococcus pneumoniae (strain Hungary19A-6).